Consider the following 1318-residue polypeptide: DNA-directed RNA polymerase subunit beta' (1318 aa).

The Zn(2+) site is built by Cys221, Cys295, Cys302, and Cys305.

It belongs to the RNA polymerase beta' chain family. RpoC2 subfamily. As to quaternary structure, in cyanobacteria the RNAP catalytic core is composed of 2 alpha, 1 beta, 1 beta', 1 gamma and 1 omega subunit. When a sigma factor is associated with the core the holoenzyme is formed, which can initiate transcription. The cofactor is Zn(2+).

The enzyme catalyses RNA(n) + a ribonucleoside 5'-triphosphate = RNA(n+1) + diphosphate. Its function is as follows. DNA-dependent RNA polymerase catalyzes the transcription of DNA into RNA using the four ribonucleoside triphosphates as substrates. The polypeptide is DNA-directed RNA polymerase subunit beta' (Synechococcus sp. (strain ATCC 27144 / PCC 6301 / SAUG 1402/1) (Anacystis nidulans)).